Reading from the N-terminus, the 86-residue chain is MKVSVLITLAVLGVMFVWASAAELEERGSDQRDSPAWLKSMERIFQSEERECRKMFGGCSVDSDCCAHLGCKPTLKYCAWDGTFGK.

A signal peptide spans 1–21; it reads MKVSVLITLAVLGVMFVWASA. A propeptide spanning residues 22 to 50 is cleaved from the precursor; the sequence is AELEERGSDQRDSPAWLKSMERIFQSEER. Disulfide bonds link Cys-52–Cys-66, Cys-59–Cys-71, and Cys-65–Cys-78. Phe-84 carries the phenylalanine amide modification.

Belongs to the neurotoxin 10 (Hwtx-1) family. 28 (Jztx-11) subfamily. As to expression, expressed by the venom gland.

The protein resides in the secreted. Functionally, this toxin acts as a voltage-dependent gating-modifier. It inhibits the sodium conductance (IC(50)=124 nM) and slows the fast inactivation (EC(50)=1180 nM) of Nav1.5/SCN5A. It significantly shifts the activation to more depolarized voltages and decreases the deactivation of Nav1.5 currents upon extreme depolarization, but only slightly affects voltage-dependence of steady-state inactivation. In addition, this toxin causes an approximately five-fold decrease in the rate of recovery from inactivation and an approximately 1.9-fold reduction in the closed-state inactivation rate. This toxin integrates the functions of site 3 toxins (alpha-scorpion toxins) with site 4 toxins (beta-scorpion and spider toxins) by targeting multiple sites on Nav1.5. Also shows inhibition of voltage-gated potassium channels (5 uM completely inhibits Kv2.1/KCNB1, whereas 5 uM moderately inhibits Kv4.2/KCND2 Kv4.1/KCND1 channels). This Chilobrachys guangxiensis (Chinese earth tiger tarantula) protein is Kappa-theraphotoxin-Cg1a 6.